Here is a 224-residue protein sequence, read N- to C-terminus: BTB/POZ domain-containing protein At5g48510 (224 aa).

The 75-residue stretch at 24-98 (VDVMLKAKNS…ICSDGSMLSA (75 aa)) folds into the BTB domain.

In terms of assembly, interacts with CUL3A.

It functions in the pathway protein modification; protein ubiquitination. In terms of biological role, may act as a substrate-specific adapter of an E3 ubiquitin-protein ligase complex (CUL3-RBX1-BTB) which mediates the ubiquitination and subsequent proteasomal degradation of target proteins. The chain is BTB/POZ domain-containing protein At5g48510 from Arabidopsis thaliana (Mouse-ear cress).